We begin with the raw amino-acid sequence, 630 residues long: Coiled-coil domain-containing protein 120 (630 aa).

The tract at residues 31 to 70 (RLRGLLDRQRTLQEALSLKLQELRKVCLQEAELTGQLPPE) is involved in CYTH2-binding. Residues 109–173 (ELALEALERE…LRDVRARLGL (65 aa)) are a coiled coil. Composition is skewed to low complexity over residues 212–222 (HSESSSLSESG) and 282–297 (ASPTSPTRSLPRSASS). Disordered regions lie at residues 212 to 435 (HSES…GAPR) and 457 to 534 (GGGT…NPLL). A compositionally biased stretch (polar residues) spans 326 to 335 (RQWSGSQDSQ). A phosphoserine mark is found at Ser358 and Ser360. The segment covering 421–434 (ARPSSAAPASRGAP) has biased composition (low complexity). An Omega-N-methylarginine modification is found at Arg435.

Interacts with NIN and CEP170; leading to recruit them to centrosomes. Directly interacts with CYTH2; this interaction stabilizes CCDC120, possibly by preventing ubiquitination. In terms of processing, ubiquitinated; interaction with CYTH2 may prevent ubiquitination.

Its subcellular location is the cytoplasm. It is found in the cytoskeleton. It localises to the microtubule organizing center. The protein resides in the centrosome. The protein localises to the centriole. Its subcellular location is the cell projection. It is found in the neuron projection. It localises to the growth cone. The protein resides in the endosome. Centriolar protein required for centriole subdistal appendage assembly and microtubule anchoring in interphase cells. Together with CCDC68, cooperate with subdistal appendage components ODF2, NIN and CEP170 for hierarchical subdistal appendage assembly. Recruits NIN and CEP170 to centrosomes. Also required for neurite growth. Localizes CYTH2 to vesicles to allow its transport along neurites, and subsequent ARF6 activation and neurite growth. The chain is Coiled-coil domain-containing protein 120 (CCDC120) from Homo sapiens (Human).